The chain runs to 286 residues: 2,3,4,5-tetrahydropyridine-2,6-dicarboxylate N-succinyltransferase (286 aa).

Substrate-binding residues include arginine 111 and aspartate 148.

The protein belongs to the transferase hexapeptide repeat family. Homotrimer.

The protein localises to the cytoplasm. The catalysed reaction is (S)-2,3,4,5-tetrahydrodipicolinate + succinyl-CoA + H2O = (S)-2-succinylamino-6-oxoheptanedioate + CoA. Its pathway is amino-acid biosynthesis; L-lysine biosynthesis via DAP pathway; LL-2,6-diaminopimelate from (S)-tetrahydrodipicolinate (succinylase route): step 1/3. This chain is 2,3,4,5-tetrahydropyridine-2,6-dicarboxylate N-succinyltransferase, found in Rhizobium etli (strain ATCC 51251 / DSM 11541 / JCM 21823 / NBRC 15573 / CFN 42).